We begin with the raw amino-acid sequence, 74 residues long: U3-agatoxin-Ao1f (74 aa).

Positions 1 to 20 (MRAIISLLLISTMVFGVIEA) are cleaved as a signal peptide. The propeptide occupies 21-34 (VSLEEGLKIFEGER). 4 cysteine pairs are disulfide-bonded: Cys-37/Cys-53, Cys-44/Cys-58, Cys-52/Cys-68, and Cys-60/Cys-66. Asn-72 is modified (asparagine amide).

The protein belongs to the neurotoxin 07 (Beta/delta-agtx) family. 03 (aga-4) subfamily. Aga sub-subfamily. Expressed by the venom gland.

It localises to the secreted. Its function is as follows. Insecticidal neurotoxin that modulates the insect Nav channel (DmNaV1/tipE (para/tipE)) in a unique manner, with both the activation and inactivation processes being affected. The voltage dependence of activation is shifted toward more hyperpolarized potentials (analogous to site 4 toxins) and a non-inactivating persistent sodium current is induced (site 3-like action). Interestingly, both effects take place in a voltage-dependent manner, producing a bell-shaped curve between -80 and 0 mV. In vivo, induces an irreversible spastic paralysis when injected into insects. This Agelena orientalis (Funnel-web spider) protein is U3-agatoxin-Ao1f.